The following is a 472-amino-acid chain: Sad1-interacting factor 3 (472 aa).

Disordered regions lie at residues 1-47 (MSTK…PRFG) and 197-223 (SSGP…DKPD). At 1–443 (MSTKDKLNLP…KSSADRKMNS (443 aa)) the chain is on the lumenal side. Polar residues predominate over residues 30 to 40 (NSESTRITPQH). S42 bears the Phosphoserine mark. The chain crosses the membrane as a helical span at residues 444–464 (ITWIIIILISLFVIIFTLEVI). The Cytoplasmic portion of the chain corresponds to 465–472 (LRLRWAHR).

This sequence belongs to the RMD1/sif2 family. Interacts with sad1.

The protein localises to the nucleus membrane. The chain is Sad1-interacting factor 3 (sif3) from Schizosaccharomyces pombe (strain 972 / ATCC 24843) (Fission yeast).